The primary structure comprises 271 residues: Proteasome inhibitor PI31 subunit (271 aa).

N-acetylalanine is present on Ala-2. Positions 2-150 (AGLEVLFASA…PIHEQWEKAR (149 aa)) are important for homodimerization and interaction with FBXO7. 2 positions are modified to phosphoserine: Ser-153 and Ser-189. Position 205 is an omega-N-methylarginine (Arg-205). The residue at position 219 (Arg-219) is an Asymmetric dimethylarginine. The interval 226 to 271 (SGLPNRLPPGAVPPGARFDPFGPIGTSPSGPNPDHLPPPGYDDMYL) is disordered. At Arg-231 the chain carries Omega-N-methylarginine. Phosphoserine is present on Ser-252. A compositionally biased stretch (pro residues) spans 255 to 265 (GPNPDHLPPPG).

The protein belongs to the proteasome inhibitor PI31 family. In terms of assembly, monomer and homodimer. Interacts with FBXO7.

Its subcellular location is the cytoplasm. The protein resides in the endoplasmic reticulum. In terms of biological role, plays an important role in control of proteasome function. Inhibits the hydrolysis of protein and peptide substrates by the 20S proteasome. Also inhibits the activation of the proteasome by the proteasome regulatory proteins PA700 and PA28. The protein is Proteasome inhibitor PI31 subunit (Psmf1) of Mus musculus (Mouse).